The chain runs to 666 residues: Protein-arginine deiminase type-4 (666 aa).

The Ca(2+) site is built by Asn153, Asp155, Asp165, Asp168, Asp176, and Asp179. Citrulline occurs at positions 212 and 218. Position 349 (Gln349) interacts with Ca(2+). Residue Asp350 is part of the active site. Ca(2+)-binding residues include Glu351, Glu353, Asp369, and Ser370. Citrulline is present on residues Arg372, Arg374, and Arg383. Residue Arg374 participates in substrate binding. 3 residues coordinate Ca(2+): Phe407, Leu410, and Glu411. Active-site residues include His471, Asp473, and Cys648.

It belongs to the protein arginine deiminase family. The cofactor is Ca(2+). Autocitrullination at Arg-372 and Arg-374 inactivates the enzyme. Expressed in pluripotent embryonic stem and induced pluripotent stem cells but not multipotent neural stem cells.

The protein localises to the cytoplasm. The protein resides in the nucleus. Its subcellular location is the cytoplasmic granule. The enzyme catalyses L-arginyl-[protein] + H2O = L-citrullyl-[protein] + NH4(+). Strongly Inhibited by F-amidine and N-alpha-benzoyl-N5-(2-chloro-1-iminoethyl)-L-ornithine amide (Cl-amidine). These inhibitors are however not specific to PADI4 and also inhibit other members of the family. Its function is as follows. Catalyzes the citrullination/deimination of arginine residues of proteins such as histones, thereby playing a key role in histone code and regulation of stem cell maintenance. Citrullinates histone H1 at 'Arg-54' (to form H1R54ci), histone H3 at 'Arg-2', 'Arg-8', 'Arg-17' and/or 'Arg-26' (to form H3R2ci, H3R8ci, H3R17ci, H3R26ci, respectively) and histone H4 at 'Arg-3' (to form H4R3ci). Acts as a key regulator of stem cell maintenance by mediating citrullination of histone H1: citrullination of 'Arg-54' of histone H1 (H1R54ci) results in H1 displacement from chromatin and global chromatin decondensation, thereby promoting pluripotency and stem cell maintenance. Promotes profound chromatin decondensation during the innate immune response to infection in neutrophils by mediating formation of H1R54ci. Required for the formation of neutrophil extracellular traps (NETs); NETs are mainly composed of DNA fibers and are released by neutrophils to bind pathogens during inflammation. Citrullination of histone H3 prevents their methylation by CARM1 and HRMT1L2/PRMT1 and represses transcription. Citrullinates EP300/P300 at 'Arg-2142', which favors its interaction with NCOA2/GRIP1. The chain is Protein-arginine deiminase type-4 (Padi4) from Mus musculus (Mouse).